The following is a 209-amino-acid chain: FMN-dependent NADH:quinone oxidoreductase (209 aa).

FMN-binding positions include serine 9, 19–21 (SVS), and 143–146 (TRGG).

It belongs to the azoreductase type 1 family. Homodimer. Requires FMN as cofactor.

The enzyme catalyses 2 a quinone + NADH + H(+) = 2 a 1,4-benzosemiquinone + NAD(+). The catalysed reaction is N,N-dimethyl-1,4-phenylenediamine + anthranilate + 2 NAD(+) = 2-(4-dimethylaminophenyl)diazenylbenzoate + 2 NADH + 2 H(+). Its function is as follows. Quinone reductase that provides resistance to thiol-specific stress caused by electrophilic quinones. In terms of biological role, also exhibits azoreductase activity. Catalyzes the reductive cleavage of the azo bond in aromatic azo compounds to the corresponding amines. This Leptothrix cholodnii (strain ATCC 51168 / LMG 8142 / SP-6) (Leptothrix discophora (strain SP-6)) protein is FMN-dependent NADH:quinone oxidoreductase.